Consider the following 304-residue polypeptide: MTKKIKCALIGPGNIGTDLLAKLQRSPVLEPIWMVGIDPESDGLKRAREMGIKTTADGVDGLIPHMQADGVQIVFDATSAYVHADNSRKVNALGALMIDLTPAAIGPFCVPTVNLKEHVGKGEMNVNMVTCGGQATIPMVAAVSRVQPVAYGEIVATVSSKSAGPGTRKNIDEFTRTTAGAVEKVGGAKKGKAIIILNPAEPPLIMRDTVHCLLESEPDQAKITESIHAMIKEVQKYVPGYKLVNGPVFDGLRVSVYLEVEGLGDYLPKYAGNLDIMTAAAARTAEMFAEEILAGQLTLQPVHA.

The Acyl-thioester intermediate role is filled by C131. NAD(+) is bound by residues 162 to 170 and N273; that span reads SAGPGTRKN.

It belongs to the acetaldehyde dehydrogenase family. As to quaternary structure, heterotetramer composed of two BphI (aldolase) and two BphJ (dehydrogenase).

The enzyme catalyses acetaldehyde + NAD(+) + CoA = acetyl-CoA + NADH + H(+). It catalyses the reaction propanal + NAD(+) + CoA = propanoyl-CoA + NADH + H(+). The protein operates within xenobiotic degradation; polychlorinated biphenyl degradation. Its activity is regulated as follows. Bound pyruvate or other intermediates in the aldol addition reaction catalyzed by BphI allosterically activates BphJ reductive deacylation activity. Functionally, catalyzes the conversion of acetaldehyde or propanal to acetyl-CoA or propanoyl-CoA, respectively, using NAD(+) and coenzyme A. Displays broad specificity since it can utilize aliphatic aldehydes from two to five carbons in length as substrates; the aldehyde substrates can be directly channeled from the aldolase BphI to the dehydrogenase BphJ. Is the final enzyme in the meta-cleavage pathway for the degradation of polychlorinated biphenyls (PCBs). Is also able to utilize NADP(+) instead of NAD(+). Is not active with succinic semialdehyde or picolinaldehyde as substrates. Can also catalyze the reverse reaction, i.e. the reductive deacylation of acetyl-CoA to acetaldehyde, which is then channeled to the BphI active site. The BphI-BphJ enzyme complex exhibits unique bidirectionality in substrate channeling and allosteric activation. This chain is Acetaldehyde dehydrogenase 4 (bphJ), found in Paraburkholderia xenovorans (strain LB400).